We begin with the raw amino-acid sequence, 389 residues long: Chalcone synthase (389 aa).

Active-site residues include cysteine 164, histidine 303, and asparagine 336.

The protein belongs to the thiolase-like superfamily. Chalcone/stilbene synthases family. In terms of assembly, homodimer. As to expression, mainly expressed in flowers, to a lower extent in young leaves, and barely in mature leaves and twigs.

The enzyme catalyses (E)-4-coumaroyl-CoA + 3 malonyl-CoA + 3 H(+) = 2',4,4',6'-tetrahydroxychalcone + 3 CO2 + 4 CoA. It participates in secondary metabolite biosynthesis; flavonoid biosynthesis. The primary product of this enzyme is 4,2',4',6'-tetrahydroxychalcone (also termed naringenin-chalcone or chalcone) which can under specific conditions spontaneously isomerize into naringenin. This is Chalcone synthase from Rhododendron dauricum (Azalea daurica).